We begin with the raw amino-acid sequence, 501 residues long: ALFYYSLLSLSFIITIKILLKITSRRLKNLPPGPPTIPIIGNLHHLKHPLHRTFTTLSQTYGDIFSLWFGSRLVVVVSSPSLAHECFTKNDIILANRPRFLTGKYIFYNYTTLGSASYGDHWRNLRRITTIDVLSNNRLNSFLGVRRDETNRLIQKLLKDVVSEGFGFTKVELRPRLTEMTFNAMMRMISGKRYYGDDGDVSDVEEAKQFREIISEMMSLLGANNKGDFLPLLRVVDLDNLEKRCKRIAKRSNAFLEGLIEEHRRGNIHSDGGTMIDHLLKLSESQPEYYSDHLIKGLIQGMLLAGTDTSAVTIEWVMSELLNHPEVLKKAKEELDTQIGKNKLVDEQDLSKLPYLQNIISETLRLHPPAPLLLPHYSSEDCTIGEFNVPKDTIILTNVWGIHRDPKHWNDALSFKPERFEKEEEVNKVMAFGLGRRACPGLSLAQRTVGFTVGLLIQCFEWERESEEKLDMMEGKGITMPMKIPLRAMCKALPIANDVTK.

Residues 7-24 (LLSLSFIITIKILLKITS) traverse the membrane as a helical segment. C439 serves as a coordination point for heme.

The protein belongs to the cytochrome P450 family. Heme is required as a cofactor. In terms of tissue distribution, expressed constitutively in leaves and stems, but not in roots.

Its subcellular location is the endoplasmic reticulum membrane. It catalyses the reaction formononetin + reduced [NADPH--hemoprotein reductase] + O2 = calycosin + oxidized [NADPH--hemoprotein reductase] + H2O + H(+). Its function is as follows. Involved in the biosynthesis of the pterocarpin phytoalexins. Acts on isoflavones with a 4'-methoxy group on the B-ring, such as biochanin A, formononetin and 2'-hydroxyformononetin. Has a low activity with daidzein and pseudobaptigenin, and no activity with the 7-O-methylated isoflavonoids isoformononetin and prunetin. This is Isoflavone 3'-hydroxylase from Medicago truncatula (Barrel medic).